The following is a 259-amino-acid chain: MFIALTNDDGIQAPGLRAMYKALKEAGHTVQVVAPVTEQSAVGHAVTIALPLRVKIFAENGFQGMGVYGTPTDCVKLGLNALLDKKPDIVVSGINAGANVGPDILYSGTVSAATEAAHMGYPSLAVSYDNFKPDDIAAHARFAVEIMESMPWQSLPPRCVLNLNLPDVPMQQCKGLTLCPQTRAVWKDWYDHRTDPRGNSYWWLNGIIPPETVAEGTDRDMLTRGYATLTPLRFDFTDRETLARLQQNMDRQRQGSEDL.

Asp-8, Asp-9, Ser-40, and Asn-95 together coordinate a divalent metal cation.

Belongs to the SurE nucleotidase family. A divalent metal cation serves as cofactor.

Its subcellular location is the cytoplasm. It catalyses the reaction a ribonucleoside 5'-phosphate + H2O = a ribonucleoside + phosphate. Functionally, nucleotidase that shows phosphatase activity on nucleoside 5'-monophosphates. The polypeptide is 5'-nucleotidase SurE (Oleidesulfovibrio alaskensis (strain ATCC BAA-1058 / DSM 17464 / G20) (Desulfovibrio alaskensis)).